Reading from the N-terminus, the 161-residue chain is Large ribosomal subunit protein uL10 (161 aa).

This sequence belongs to the universal ribosomal protein uL10 family. In terms of assembly, part of the ribosomal stalk of the 50S ribosomal subunit. The N-terminus interacts with L11 and the large rRNA to form the base of the stalk. The C-terminus forms an elongated spine to which L12 dimers bind in a sequential fashion forming a multimeric L10(L12)X complex.

In terms of biological role, forms part of the ribosomal stalk, playing a central role in the interaction of the ribosome with GTP-bound translation factors. This is Large ribosomal subunit protein uL10 from Buchnera aphidicola subsp. Cinara cedri (strain Cc).